Reading from the N-terminus, the 211-residue chain is MAKLYFYYSTMNAGKSTVLLQSSYNYRERGMNTLILSPEIDTRFGSGKVASRIGIESESVSFNTSDNLLNLVRNETRINPLHCVLVDEAQFLTRTQVRQLSDVCDDLDIPVLAYGLRTDFQGNLFEGSEHLLAWADTLTELKTICHCGRKATMVLRVSESGQVIRDGEQVQIGGNERYQTVCRLHFKEAIYQRAEDELPLLDSNEPRQSER.

ATP is bound by residues 9 to 16 and 87 to 90; these read STMNAGKS and DEAQ. Glu-88 acts as the Proton acceptor in catalysis. Zn(2+)-binding residues include Cys-145, Cys-147, Cys-182, and His-185.

Belongs to the thymidine kinase family. Homotetramer.

The protein localises to the cytoplasm. The enzyme catalyses thymidine + ATP = dTMP + ADP + H(+). The chain is Thymidine kinase from Rhodopirellula baltica (strain DSM 10527 / NCIMB 13988 / SH1).